Consider the following 263-residue polypeptide: Small ribosomal subunit protein eS4 (263 aa).

Positions 42–104 (LPLIVFLRNR…TGEHFRLVYD (63 aa)) constitute an S4 RNA-binding domain.

It belongs to the eukaryotic ribosomal protein eS4 family.

The sequence is that of Small ribosomal subunit protein eS4 (RPS4Y1) from Pan paniscus (Pygmy chimpanzee).